Here is a 35-residue protein sequence, read N- to C-terminus: Photosystem II reaction center protein T (35 aa).

The helical transmembrane segment at 3–23 (ALVYTFLLVGTLGIIFFAIFF) threads the bilayer.

Belongs to the PsbT family. In terms of assembly, PSII is composed of 1 copy each of membrane proteins PsbA, PsbB, PsbC, PsbD, PsbE, PsbF, PsbH, PsbI, PsbJ, PsbK, PsbL, PsbM, PsbT, PsbY, PsbZ, Psb30/Ycf12, at least 3 peripheral proteins of the oxygen-evolving complex and a large number of cofactors. It forms dimeric complexes.

It localises to the plastid. It is found in the chloroplast thylakoid membrane. Found at the monomer-monomer interface of the photosystem II (PS II) dimer, plays a role in assembly and dimerization of PSII. PSII is a light-driven water plastoquinone oxidoreductase, using light energy to abstract electrons from H(2)O, generating a proton gradient subsequently used for ATP formation. This is Photosystem II reaction center protein T from Staurastrum punctulatum (Green alga).